The sequence spans 309 residues: Taste receptor type 2 member 114 (309 aa).

The Extracellular portion of the chain corresponds to 1–7 (MLSTMEG). Residues 8–28 (VLLSVSTSEAVLGIVGNTFIA) form a helical membrane-spanning segment. Topologically, residues 29 to 43 (LVNCMDYNRNKKLSN) are cytoplasmic. A helical membrane pass occupies residues 44 to 64 (IGFILTGLAISRICLVLILIT). The Extracellular portion of the chain corresponds to 65–87 (EAYIKIFYPQLLSPVNIIELISY). The chain crosses the membrane as a helical span at residues 88 to 108 (LWIIICQLNVWFATSLSIFYF). The Cytoplasmic portion of the chain corresponds to 109 to 127 (LKIANFSHYIFVWLKRRID). The chain crosses the membrane as a helical span at residues 128-148 (LVFFFLIGCLLISWLFSFPVV). The Extracellular portion of the chain corresponds to 149–182 (AKMVKDNKMLYINTSWQIHMKKSELIINYVFTNG). N-linked (GlcNAc...) asparagine glycosylation occurs at asparagine 161. Residues 183–203 (GVFLFFMIMLIVCFLLIISLW) form a helical membrane-spanning segment. Residues 204–233 (RHRRQMESNKLGFRDLNTEVHVRTIKVLLS) lie on the Cytoplasmic side of the membrane. Residues 234–254 (FIILFILHFMGITINVICLLI) form a helical membrane-spanning segment. Residues 255-259 (PESNL) are Extracellular-facing. The helical transmembrane segment at 260 to 280 (LFMFGLTTAFIYPGCHSLILI) threads the bilayer. At 281–309 (LANSRLKQCSVMILQLLKCCENGKELRDT) the chain is on the cytoplasmic side.

Belongs to the G-protein coupled receptor T2R family.

It is found in the membrane. In terms of biological role, putative taste receptor which may play a role in the perception of bitterness. The polypeptide is Taste receptor type 2 member 114 (Mus musculus (Mouse)).